Reading from the N-terminus, the 308-residue chain is MQRITYLGPEGTFSEAAMITLRTTGRIPGSSEVEPVSVASAREALVQVQAGDADYACVPIESSLEGPVVPTLDTLAVGAPLQIFAETVLPVSFTIAVRPGTAAGDVKTVAGFPIAAAQVREWLATNLPDAELVAANSNAAAAEDVKAERADAGVCTEWAAQRLGLHALASGVVDEAHAHTRFVLVGRPGPPPAATGADRTSVVLGLGNVPGALAAAMNEFAIRDIDLTRIESRPTRTGLGTYRFFLDCVGHIDDIAVGEALKGLHRRCEDVRYLGSWPRGTTAPTGANPPVLDEASGWLAETREGRLR.

Positions 3–187 (RITYLGPEGT…AHTRFVLVGR (185 aa)) constitute a Prephenate dehydratase domain. An ACT domain is found at 201-278 (SVVLGLGNVP…EDVRYLGSWP (78 aa)).

As to quaternary structure, homodimer.

The enzyme catalyses prephenate + H(+) = 3-phenylpyruvate + CO2 + H2O. The protein operates within amino-acid biosynthesis; L-phenylalanine biosynthesis; phenylpyruvate from prephenate: step 1/1. The protein is Prephenate dehydratase (pheA) of Mycobacteroides abscessus (strain ATCC 19977 / DSM 44196 / CCUG 20993 / CIP 104536 / JCM 13569 / NCTC 13031 / TMC 1543 / L948) (Mycobacterium abscessus).